Reading from the N-terminus, the 1512-residue chain is DNA (cytosine-5)-methyltransferase 2 (1512 aa).

Residues 1–22 (METKVGKQKKRSVDSNDDVSKE) show a composition bias toward basic and acidic residues. Disordered stretches follow at residues 1 to 35 (METK…RNFK) and 634 to 678 (AIHE…GNSE). The segment covering 638–662 (VEEEEIEEDEEEDENEEDDIEEEAV) has biased composition (acidic residues). BAH domains are found at residues 707 to 841 (ETVA…FSLP) and 909 to 1026 (TTLK…KQFP). An SAM-dependent MTase C5-type domain is found at 1071–1505 (LATLDIFAGC…RKLKEALYLK (435 aa)). Cys1176 is a catalytic residue.

This sequence belongs to the class I-like SAM-binding methyltransferase superfamily. C5-methyltransferase family. In terms of tissue distribution, expressed at low levels in vegetative and floral organs.

The protein resides in the nucleus. The enzyme catalyses a 2'-deoxycytidine in DNA + S-adenosyl-L-methionine = a 5-methyl-2'-deoxycytidine in DNA + S-adenosyl-L-homocysteine + H(+). Functionally, maintains chromatin CpG methylation that plays a role in genomic imprinting, regulation of embryogenesis and seed viability. Required for proper patterns of CG DNA methylation in dividing cells. This is DNA (cytosine-5)-methyltransferase 2 (MET2) from Arabidopsis thaliana (Mouse-ear cress).